Reading from the N-terminus, the 176-residue chain is Co-chaperone protein HscB homolog (176 aa).

Positions 8–80 (DFFALFGLPV…LRRATYLLKL (73 aa)) constitute a J domain.

This sequence belongs to the HscB family. As to quaternary structure, interacts with HscA and stimulates its ATPase activity.

Its function is as follows. Co-chaperone involved in the maturation of iron-sulfur cluster-containing proteins. Seems to help targeting proteins to be folded toward HscA. This is Co-chaperone protein HscB homolog from Cupriavidus taiwanensis (strain DSM 17343 / BCRC 17206 / CCUG 44338 / CIP 107171 / LMG 19424 / R1) (Ralstonia taiwanensis (strain LMG 19424)).